Here is a 545-residue protein sequence, read N- to C-terminus: Chaperonin GroEL (545 aa).

Residues 30–33 (TLGP), Lys-51, 87–91 (DGTTT), Gly-415, and Asp-495 contribute to the ATP site.

The protein belongs to the chaperonin (HSP60) family. Forms a cylinder of 14 subunits composed of two heptameric rings stacked back-to-back. Interacts with the co-chaperonin GroES.

The protein resides in the cytoplasm. It carries out the reaction ATP + H2O + a folded polypeptide = ADP + phosphate + an unfolded polypeptide.. Functionally, together with its co-chaperonin GroES, plays an essential role in assisting protein folding. The GroEL-GroES system forms a nano-cage that allows encapsulation of the non-native substrate proteins and provides a physical environment optimized to promote and accelerate protein folding. In Shewanella sp. (strain ANA-3), this protein is Chaperonin GroEL.